Consider the following 257-residue polypeptide: Acetylglutamate kinase (257 aa).

Substrate contacts are provided by residues 43 to 44 (GG), Arg-65, and Asn-157. ATP is bound by residues 180 to 185 (DISSIL) and 208 to 210 (IIT).

It belongs to the acetylglutamate kinase family. ArgB subfamily. As to quaternary structure, homodimer.

It localises to the cytoplasm. It carries out the reaction N-acetyl-L-glutamate + ATP = N-acetyl-L-glutamyl 5-phosphate + ADP. Its pathway is amino-acid biosynthesis; L-arginine biosynthesis; N(2)-acetyl-L-ornithine from L-glutamate: step 2/4. Functionally, catalyzes the ATP-dependent phosphorylation of N-acetyl-L-glutamate. The sequence is that of Acetylglutamate kinase from Buchnera aphidicola subsp. Acyrthosiphon pisum (strain 5A).